Here is a 574-residue protein sequence, read N- to C-terminus: MPRGLELLIAQTILQGFDAQYGRFLEVTSGAQQRFEQADWHAVQQAMKNRIHLYDHHVGLVVEQLRCITNGQSTDAAFLLRVKEHYTRLLPDYPRFEIAESFFNSVYCRLFDHRSLTPERLFIFSSQPERRFRTIPRPLAKDFHPDHGWESLLMRVISDLPLRLRWQNKSRDIHYIVRHLTETLGTDNLAESHLQVANELFYRNKAAWLVGKLITPSGTLPFLLPIHQTDDGELFIDTCLTTTAEASIVFGFARSYFMVYAPLPAALVEWLREILPGKTTAELYMAIGCQKHAKTESYREYLVYLQGCNEQFIEAPGIRGMVMLVFTLPGFDRVFKVIKDRFAPQKEMSAAHVRACYQLVKEHDRVGRMADTQEFENFVLEKRHISPALMELLLQEAAEKITDLGEQIVIRHLYIERRMVPLNIWLEQVEGQQLRDAIEEYGNAIRQLAAANIFPGDMLFKNFGVTRHGRVVFYDYDEICYMTEVNFRDIPLPRYPEDELASEPWYSVSPGDVFPEEFRHWLCADPRIGPLFEEMHADLFRADYWRALQNRIREGHVEDVYAYRRRQRFSVRFV.

ATP contacts are provided by residues 315 to 321 (APGIRGM) and lysine 336. Aspartate 371 is an active-site residue.

Belongs to the AceK family.

The protein localises to the cytoplasm. The catalysed reaction is L-seryl-[isocitrate dehydrogenase] + ATP = O-phospho-L-seryl-[isocitrate dehydrogenase] + ADP + H(+). In terms of biological role, bifunctional enzyme which can phosphorylate or dephosphorylate isocitrate dehydrogenase (IDH) on a specific serine residue. This is a regulatory mechanism which enables bacteria to bypass the Krebs cycle via the glyoxylate shunt in response to the source of carbon. When bacteria are grown on glucose, IDH is fully active and unphosphorylated, but when grown on acetate or ethanol, the activity of IDH declines drastically concomitant with its phosphorylation. This is Isocitrate dehydrogenase kinase/phosphatase from Escherichia coli O81 (strain ED1a).